The following is a 252-amino-acid chain: 3-dehydroquinate dehydratase (252 aa).

Residues serine 21, 46-48 (EWR), and arginine 82 contribute to the 3-dehydroquinate site. Residue histidine 143 is the Proton donor/acceptor of the active site. Catalysis depends on lysine 170, which acts as the Schiff-base intermediate with substrate. Residues arginine 213, serine 232, and glutamine 236 each contribute to the 3-dehydroquinate site.

Belongs to the type-I 3-dehydroquinase family. In terms of assembly, homodimer.

The catalysed reaction is 3-dehydroquinate = 3-dehydroshikimate + H2O. The protein operates within metabolic intermediate biosynthesis; chorismate biosynthesis; chorismate from D-erythrose 4-phosphate and phosphoenolpyruvate: step 3/7. Functionally, involved in the third step of the chorismate pathway, which leads to the biosynthesis of aromatic amino acids. Catalyzes the cis-dehydration of 3-dehydroquinate (DHQ) and introduces the first double bond of the aromatic ring to yield 3-dehydroshikimate. The chain is 3-dehydroquinate dehydratase from Escherichia coli O127:H6 (strain E2348/69 / EPEC).